A 343-amino-acid chain; its full sequence is SUMO-activating enzyme subunit aos-1 (343 aa).

This sequence belongs to the ubiquitin-activating E1 family. Heterodimer of aos-1 and uba-2.

It participates in protein modification; protein sumoylation. Functionally, the dimeric enzyme acts as an E1 ligase for smo-1. It mediates ATP-dependent activation of smo-1 and formation of a thioester with a conserved cysteine residue on uba-2. The protein is SUMO-activating enzyme subunit aos-1 (aos-1) of Caenorhabditis elegans.